The sequence spans 100 residues: Urease subunit gamma (100 aa).

It belongs to the urease gamma subunit family. As to quaternary structure, heterotrimer of UreA (gamma), UreB (beta) and UreC (alpha) subunits. Three heterotrimers associate to form the active enzyme.

Its subcellular location is the cytoplasm. It catalyses the reaction urea + 2 H2O + H(+) = hydrogencarbonate + 2 NH4(+). It functions in the pathway nitrogen metabolism; urea degradation; CO(2) and NH(3) from urea (urease route): step 1/1. The chain is Urease subunit gamma from Synechococcus sp. (strain CC9902).